The chain runs to 486 residues: Aspartyl/glutamyl-tRNA(Asn/Gln) amidotransferase subunit B (486 aa).

Belongs to the GatB/GatE family. GatB subfamily. In terms of assembly, heterotrimer of A, B and C subunits.

It catalyses the reaction L-glutamyl-tRNA(Gln) + L-glutamine + ATP + H2O = L-glutaminyl-tRNA(Gln) + L-glutamate + ADP + phosphate + H(+). The catalysed reaction is L-aspartyl-tRNA(Asn) + L-glutamine + ATP + H2O = L-asparaginyl-tRNA(Asn) + L-glutamate + ADP + phosphate + 2 H(+). Its function is as follows. Allows the formation of correctly charged Asn-tRNA(Asn) or Gln-tRNA(Gln) through the transamidation of misacylated Asp-tRNA(Asn) or Glu-tRNA(Gln) in organisms which lack either or both of asparaginyl-tRNA or glutaminyl-tRNA synthetases. The reaction takes place in the presence of glutamine and ATP through an activated phospho-Asp-tRNA(Asn) or phospho-Glu-tRNA(Gln). The sequence is that of Aspartyl/glutamyl-tRNA(Asn/Gln) amidotransferase subunit B from Herminiimonas arsenicoxydans.